We begin with the raw amino-acid sequence, 569 residues long: uncharacterized protein (569 aa).

The N-terminal stretch at 1–22 is a signal peptide; sequence MSLLVKAALILKCASMLQGVSA. Residues 498 to 541 are disordered; sequence RETSILDSTNTTSTNATNTTTTTSSSSTASSSASASSSTSATSG. The span at 505 to 540 shows a compositional bias: low complexity; it reads STNTTSTNATNTTTTTSSSSTASSSASASSSTSATS.

It localises to the secreted. Its subcellular location is the cell surface. This is an uncharacterized protein from Schizosaccharomyces pombe (strain 972 / ATCC 24843) (Fission yeast).